Here is a 103-residue protein sequence, read N- to C-terminus: Ig kappa-b5 chain C region (103 aa).

Positions 5 to 99 constitute an Ig-like domain; the sequence is PTVLIFPPAP…GAGSVVQSFS (95 aa). Cys-26 and Cys-85 are disulfide-bonded.

The polypeptide is Ig kappa-b5 chain C region (Oryctolagus cuniculus (Rabbit)).